A 305-amino-acid chain; its full sequence is Ribosomal RNA small subunit methyltransferase H (305 aa).

S-adenosyl-L-methionine is bound by residues 47–49, Asp-66, Phe-93, Asp-108, and Gln-115; that span reads GGH. Residues 279–305 are disordered; it reads ADSNEKLNNPRSRSAKLRLAKKRNPNE. The segment covering 291-305 has biased composition (basic residues); sequence RSAKLRLAKKRNPNE.

This sequence belongs to the methyltransferase superfamily. RsmH family.

It is found in the cytoplasm. It carries out the reaction cytidine(1402) in 16S rRNA + S-adenosyl-L-methionine = N(4)-methylcytidine(1402) in 16S rRNA + S-adenosyl-L-homocysteine + H(+). Its function is as follows. Specifically methylates the N4 position of cytidine in position 1402 (C1402) of 16S rRNA. In Prochlorococcus marinus (strain SARG / CCMP1375 / SS120), this protein is Ribosomal RNA small subunit methyltransferase H.